A 631-amino-acid polypeptide reads, in one-letter code: Probable ATP-dependent RNA helicase DDX53 (631 aa).

The KH domain occupies 48-109 (EPPLCFKIKN…EMKAKAKAAI (62 aa)). The Q motif signature appears at 222 to 250 (RFKDAFQQYPDLLKSIIRVGIVKPTPIQS). Residues Lys-244, Gln-249, 268–273 (TGTGKT), and His-311 contribute to the ATP site. Residues 253 to 428 (WPIILQGIDL…LSYLKDPMIV (176 aa)) enclose the Helicase ATP-binding domain. The DEAD box motif lies at 376-379 (DEAD). The Helicase C-terminal domain maps to 440–601 (TVKQNIIVTT…SVPEDLVVMA (162 aa)).

Belongs to the DEAD box helicase family. As to expression, expressed in testis. Wide expression in various cancer tissues and cancer cell lines.

It is found in the nucleus. It catalyses the reaction ATP + H2O = ADP + phosphate + H(+). The chain is Probable ATP-dependent RNA helicase DDX53 (DDX53) from Homo sapiens (Human).